A 65-amino-acid chain; its full sequence is UPF0434 protein Mpe_A2486 (65 aa).

This sequence belongs to the UPF0434 family.

This is UPF0434 protein Mpe_A2486 from Methylibium petroleiphilum (strain ATCC BAA-1232 / LMG 22953 / PM1).